Consider the following 526-residue polypeptide: Butyrophilin subfamily 1 member A1 (526 aa).

An N-terminal signal peptide occupies residues 1-26; sequence MAVFPNSCLAGCLLIFILLQLPKLDS. Ig-like V-type domains follow at residues 27 to 140 and 148 to 234; these read APFD…VHLK and PHIS…VEVS. Residues 27–242 lie on the Extracellular side of the membrane; the sequence is APFDVIGPQE…VSIPASFFPR (216 aa). Disulfide bonds link Cys-50–Cys-124 and Cys-164–Cys-218. Asn-55 carries N-linked (GlcNAc...) (complex) asparagine glycosylation. The N-linked (GlcNAc...) (hybrid) asparagine glycan is linked to Asn-215. The helical transmembrane segment at 243–269 threads the bilayer; that stretch reads LTPWMVAVAVILVVLGLLTIGSIFFTW. The Cytoplasmic portion of the chain corresponds to 270–526; the sequence is RLYKERSRQR…IPLQPSQGVP (257 aa). In terms of domain architecture, B30.2/SPRY spans 285–479; sequence SKEKLLEELK…LTICPVTDGL (195 aa).

The protein belongs to the immunoglobulin superfamily. BTN/MOG family. As to quaternary structure, seems to associate with xanthine dehydrogenase/oxidase. As to expression, expressed in mammary tissue.

The protein resides in the membrane. Its function is as follows. May function in the secretion of milk-fat droplets. May act as a specific membrane-associated receptor for the association of cytoplasmic droplets with the apical plasma membrane. Inhibits the proliferation of CD4 and CD8 T-cells activated by anti-CD3 antibodies, T-cell metabolism and IL2 and IFNG secretion. The chain is Butyrophilin subfamily 1 member A1 (BTN1A1) from Bos taurus (Bovine).